A 159-amino-acid polypeptide reads, in one-letter code: Eukaryotic translation initiation factor 5A-4 (159 aa).

Positions 1 to 12 are enriched in basic and acidic residues; it reads MSDEEHQFESKA. A disordered region spans residues 1–21; sequence MSDEEHQFESKADAGASKTYP. Lysine 52 is modified (hypusine).

The protein belongs to the eIF-5A family. In terms of processing, lys-52 undergoes hypusination, a unique post-translational modification that consists in the addition of a butylamino group from spermidine to lysine side chain, leading to the formation of the unusual amino acid hypusine. eIF-5As are the only known proteins to undergo this modification, which is essential for their function.

Translation factor that promotes translation elongation and termination, particularly upon ribosome stalling at specific amino acid sequence contexts. Binds between the exit (E) and peptidyl (P) site of the ribosome and promotes rescue of stalled ribosome: specifically required for efficient translation of polyproline-containing peptides as well as other motifs that stall the ribosome. Acts as a ribosome quality control (RQC) cofactor by joining the RQC complex to facilitate peptidyl transfer during CAT tailing step. The chain is Eukaryotic translation initiation factor 5A-4 (EIF5A4) from Solanum tuberosum (Potato).